A 316-amino-acid polypeptide reads, in one-letter code: ATP synthase gamma chain (316 aa).

The protein belongs to the ATPase gamma chain family. In terms of assembly, F-type ATPases have 2 components, CF(1) - the catalytic core - and CF(0) - the membrane proton channel. CF(1) has five subunits: alpha(3), beta(3), gamma(1), delta(1), epsilon(1). CF(0) has three main subunits: a, b and c.

The protein localises to the cellular thylakoid membrane. Its function is as follows. Produces ATP from ADP in the presence of a proton gradient across the membrane. The gamma chain is believed to be important in regulating ATPase activity and the flow of protons through the CF(0) complex. This is ATP synthase gamma chain from Synechococcus sp. (strain WH7803).